The following is a 245-amino-acid chain: Ribosomal RNA large subunit methyltransferase E (245 aa).

The tract at residues 1 to 26 (MTKPPVGSNRSGRKLGQKVKKGKLKA) is disordered. Residues 11 to 26 (SGRKLGQKVKKGKLKA) show a composition bias toward basic residues. S-adenosyl-L-methionine-binding residues include G81, W83, D104, D120, and D144. The active-site Proton acceptor is K184.

It belongs to the class I-like SAM-binding methyltransferase superfamily. RNA methyltransferase RlmE family.

The protein localises to the cytoplasm. It carries out the reaction uridine(2552) in 23S rRNA + S-adenosyl-L-methionine = 2'-O-methyluridine(2552) in 23S rRNA + S-adenosyl-L-homocysteine + H(+). In terms of biological role, specifically methylates the uridine in position 2552 of 23S rRNA at the 2'-O position of the ribose in the fully assembled 50S ribosomal subunit. This chain is Ribosomal RNA large subunit methyltransferase E, found in Sinorhizobium medicae (strain WSM419) (Ensifer medicae).